A 520-amino-acid chain; its full sequence is Maturase K (520 aa).

Belongs to the intron maturase 2 family. MatK subfamily.

The protein resides in the plastid. Its subcellular location is the chloroplast. Its function is as follows. Usually encoded in the trnK tRNA gene intron. Probably assists in splicing its own and other chloroplast group II introns. The protein is Maturase K of Galanthus elwesii (Giant snowdrop).